The following is an 872-amino-acid chain: Armadillo repeat-containing protein 3 (872 aa).

12 ARM repeats span residues 15-54 (DVFD…KFAL), 57-96 (EENK…ILAS), 98-138 (NDVK…NMSA), 140-179 (YTSK…NLVQ), 181-220 (FQCR…VIAN), 222-262 (KESR…NCLE), 264-304 (MDTM…KAAY), 306-345 (PENR…AMCE), 346-385 (NSGS…NLTT), 388-427 (PANA…NMAM), 429-468 (EPLR…ATAC), and 470-509 (VEAR…VCAG). S-palmitoyl cysteine attachment occurs at residues Cys507 and Cys518. A disordered region spans residues 610–693 (VSPPSSMEDK…SKGKKEEEKV (84 aa)). The segment covering 626 to 635 (RSISSSSSLR) has biased composition (low complexity). Over residues 636–646 (RSSKEKNKKNS) the composition is skewed to basic residues. Residues 675–693 (ATKEKGWRKSKGKKEEEKV) are compositionally biased toward basic and acidic residues.

Homodimer. Interacts with PIK3C3, PIK3R4 and BECN1. Interacts (via ARM domains) with ATG14. Post-translationally, palmitoylation is important for its function in autophagy. As to expression, expressed in skeletal muscle, brain, lung, kidney, prostate and testis. In terms of tissue distribution, mainly expressed in skeletal muscle, liver, spleen and thymus. Expressed only in the testis among normal tissues but is expressed frequently in various cancer tissues and, particularly, in pancreatic, lung and endometrial cancers.

In terms of biological role, essential for male fertility and sperm motility. During spermatogenesis, promotes the autophagic degradation of excessive ribosomes, providing energy resources for mitochondria and thus ensuring sperm flagellar motility. The polypeptide is Armadillo repeat-containing protein 3 (ARMC3) (Homo sapiens (Human)).